Consider the following 282-residue polypeptide: HTH-type transcriptional activator RhaR (282 aa).

Residues Asp179–Leu277 enclose the HTH araC/xylS-type domain. DNA-binding regions (H-T-H motif) lie at residues Asp196–Thr217 and Ile244–Thr267.

In terms of assembly, binds DNA as a dimer.

Its subcellular location is the cytoplasm. In terms of biological role, activates expression of the rhaSR operon in response to L-rhamnose. In Salmonella dublin (strain CT_02021853), this protein is HTH-type transcriptional activator RhaR.